A 454-amino-acid chain; its full sequence is Bifunctional protein GlmU (454 aa).

The segment at 1-226 is pyrophosphorylase; it reads MLAVAVLAAG…PDEVNGINNR (226 aa). UDP-N-acetyl-alpha-D-glucosamine contacts are provided by residues 7-10, Lys-21, Gln-73, and 78-79; these read LAAG and GT. Asp-103 is a Mg(2+) binding site. Positions 140, 155, 170, and 224 each coordinate UDP-N-acetyl-alpha-D-glucosamine. Asn-224 lines the Mg(2+) pocket. The interval 227–247 is linker; sequence RQLAQCEGVLQQRLRDHWMDE. The tract at residues 248 to 454 is N-acetyltransferase; the sequence is GVTFVDPASC…WDRNTQAAQS (207 aa). Arg-329 and Lys-347 together coordinate UDP-N-acetyl-alpha-D-glucosamine. His-359 (proton acceptor) is an active-site residue. UDP-N-acetyl-alpha-D-glucosamine contacts are provided by Tyr-362 and Asn-373. Acetyl-CoA contacts are provided by Ala-376, Ala-419, and Arg-436.

It in the N-terminal section; belongs to the N-acetylglucosamine-1-phosphate uridyltransferase family. In the C-terminal section; belongs to the transferase hexapeptide repeat family. Homotrimer. The cofactor is Mg(2+).

The protein resides in the cytoplasm. The catalysed reaction is alpha-D-glucosamine 1-phosphate + acetyl-CoA = N-acetyl-alpha-D-glucosamine 1-phosphate + CoA + H(+). It carries out the reaction N-acetyl-alpha-D-glucosamine 1-phosphate + UTP + H(+) = UDP-N-acetyl-alpha-D-glucosamine + diphosphate. It functions in the pathway nucleotide-sugar biosynthesis; UDP-N-acetyl-alpha-D-glucosamine biosynthesis; N-acetyl-alpha-D-glucosamine 1-phosphate from alpha-D-glucosamine 6-phosphate (route II): step 2/2. It participates in nucleotide-sugar biosynthesis; UDP-N-acetyl-alpha-D-glucosamine biosynthesis; UDP-N-acetyl-alpha-D-glucosamine from N-acetyl-alpha-D-glucosamine 1-phosphate: step 1/1. Its pathway is bacterial outer membrane biogenesis; LPS lipid A biosynthesis. In terms of biological role, catalyzes the last two sequential reactions in the de novo biosynthetic pathway for UDP-N-acetylglucosamine (UDP-GlcNAc). The C-terminal domain catalyzes the transfer of acetyl group from acetyl coenzyme A to glucosamine-1-phosphate (GlcN-1-P) to produce N-acetylglucosamine-1-phosphate (GlcNAc-1-P), which is converted into UDP-GlcNAc by the transfer of uridine 5-monophosphate (from uridine 5-triphosphate), a reaction catalyzed by the N-terminal domain. This Synechococcus sp. (strain CC9311) protein is Bifunctional protein GlmU.